The following is a 481-amino-acid chain: tRNA sulfurtransferase (481 aa).

The region spanning 54–156 (ADGDGPLRHI…GKDVFFYHEI (103 aa)) is the THUMP domain. ATP is bound by residues 174–175 (LV), Lys256, Gly278, and Gln287. Cys334 and Cys433 are disulfide-bonded. Residues 388-463 (IPKDAVIIDL…YYSTFSDLKK (76 aa)) form the Rhodanese domain. The Cysteine persulfide intermediate role is filled by Cys433.

Belongs to the ThiI family.

It localises to the cytoplasm. The catalysed reaction is [ThiI sulfur-carrier protein]-S-sulfanyl-L-cysteine + a uridine in tRNA + 2 reduced [2Fe-2S]-[ferredoxin] + ATP + H(+) = [ThiI sulfur-carrier protein]-L-cysteine + a 4-thiouridine in tRNA + 2 oxidized [2Fe-2S]-[ferredoxin] + AMP + diphosphate. It catalyses the reaction [ThiS sulfur-carrier protein]-C-terminal Gly-Gly-AMP + S-sulfanyl-L-cysteinyl-[cysteine desulfurase] + AH2 = [ThiS sulfur-carrier protein]-C-terminal-Gly-aminoethanethioate + L-cysteinyl-[cysteine desulfurase] + A + AMP + 2 H(+). The protein operates within cofactor biosynthesis; thiamine diphosphate biosynthesis. Functionally, catalyzes the ATP-dependent transfer of a sulfur to tRNA to produce 4-thiouridine in position 8 of tRNAs, which functions as a near-UV photosensor. Also catalyzes the transfer of sulfur to the sulfur carrier protein ThiS, forming ThiS-thiocarboxylate. This is a step in the synthesis of thiazole, in the thiamine biosynthesis pathway. The sulfur is donated as persulfide by IscS. The protein is tRNA sulfurtransferase of Thermoplasma acidophilum (strain ATCC 25905 / DSM 1728 / JCM 9062 / NBRC 15155 / AMRC-C165).